The chain runs to 62 residues: UPF0434 protein RSc2531 (62 aa).

Belongs to the UPF0434 family.

This is UPF0434 protein RSc2531 from Ralstonia nicotianae (strain ATCC BAA-1114 / GMI1000) (Ralstonia solanacearum).